Reading from the N-terminus, the 150-residue chain is 3-hydroxyacyl-[acyl-carrier-protein] dehydratase FabZ (150 aa).

Residue His54 is part of the active site.

It belongs to the thioester dehydratase family. FabZ subfamily.

The protein localises to the cytoplasm. The enzyme catalyses a (3R)-hydroxyacyl-[ACP] = a (2E)-enoyl-[ACP] + H2O. Involved in unsaturated fatty acids biosynthesis. Catalyzes the dehydration of short chain beta-hydroxyacyl-ACPs and long chain saturated and unsaturated beta-hydroxyacyl-ACPs. This chain is 3-hydroxyacyl-[acyl-carrier-protein] dehydratase FabZ, found in Chromobacterium violaceum (strain ATCC 12472 / DSM 30191 / JCM 1249 / CCUG 213 / NBRC 12614 / NCIMB 9131 / NCTC 9757 / MK).